We begin with the raw amino-acid sequence, 262 residues long: Phosphate import ATP-binding protein PstB (262 aa).

The ABC transporter domain occupies 16–257 (IDVRNLNFYY…PHRKETEDYI (242 aa)). 48–55 (GPSGCGKS) provides a ligand contact to ATP.

It belongs to the ABC transporter superfamily. Phosphate importer (TC 3.A.1.7) family. The complex is composed of two ATP-binding proteins (PstB), two transmembrane proteins (PstC and PstA) and a solute-binding protein (PstS).

The protein localises to the cell inner membrane. It carries out the reaction phosphate(out) + ATP + H2O = ADP + 2 phosphate(in) + H(+). Functionally, part of the ABC transporter complex PstSACB involved in phosphate import. Responsible for energy coupling to the transport system. In Cupriavidus pinatubonensis (strain JMP 134 / LMG 1197) (Cupriavidus necator (strain JMP 134)), this protein is Phosphate import ATP-binding protein PstB.